Reading from the N-terminus, the 1342-residue chain is DNA-directed RNA polymerase subunit beta (1342 aa).

Belongs to the RNA polymerase beta chain family. As to quaternary structure, the RNAP catalytic core consists of 2 alpha, 1 beta, 1 beta' and 1 omega subunit. When a sigma factor is associated with the core the holoenzyme is formed, which can initiate transcription.

It carries out the reaction RNA(n) + a ribonucleoside 5'-triphosphate = RNA(n+1) + diphosphate. Its function is as follows. DNA-dependent RNA polymerase catalyzes the transcription of DNA into RNA using the four ribonucleoside triphosphates as substrates. This chain is DNA-directed RNA polymerase subunit beta, found in Vibrio campbellii (strain ATCC BAA-1116).